The sequence spans 367 residues: HTH-type transcriptional regulator GbdR (367 aa).

Residues 227 to 325 form the HTH araC/xylS-type domain; it reads QEIVALMEAN…GIPPRDERQG (99 aa). 2 consecutive DNA-binding regions (H-T-H motif) follow at residues 244 to 265 and 292 to 315; these read DELA…QKYL and IIEV…REYF.

In terms of biological role, specific regulator of choline metabolism, which activates transcription of at least 25 genes from 11 promoters in response to choline metabolites. Required for the induction of plcH, encoding the phospholipase C, and pchP, encoding the phosphorylcholine phosphatase, in response to glycine betaine (GB) and dimethylglycine (DMG). Also controls the expression of gbcAB and dgcAB, which are required for GB and DMG degradation, respectively, in response to both GB and DMG. The GbdR regulon also includes genes encoding sarcosine, glycine and serine catabolic enzymes, the BetX and CbcXWV quaternary amine transport proteins and the acetylcholine esterase gene, choE. Acts by binding directly to the promoter region of the genes. May play an important role during P.aeruginosa interactions with eukaryotes. This Pseudomonas aeruginosa (strain UCBPP-PA14) protein is HTH-type transcriptional regulator GbdR.